The primary structure comprises 203 residues: MSSPLECAKYLLSAHTPHQLPSDDGSEVAFAGRSNAGKSSVLNTLTRQNALARVSKTPGRTQQLVYFTVTPQRYLVDLPGYGYAKVPKELQIHWQAFIDTYFHHRQSLRGLVVVMDIRHPLKEYDLQMLAYARQRGLPAQALLTKADKLGRGQQAQTLQKVRNELTKHFADHINIQTFSSKSRQGVEQLHTVIETWLGLARSG.

The EngB-type G domain maps to 24–199 (DGSEVAFAGR…HTVIETWLGL (176 aa)). GTP contacts are provided by residues 32 to 39 (GRSNAGKS), 59 to 63 (GRTQQ), 77 to 80 (DLPG), 144 to 147 (TKAD), and 178 to 180 (FSS). S39 and T61 together coordinate Mg(2+).

The protein belongs to the TRAFAC class TrmE-Era-EngA-EngB-Septin-like GTPase superfamily. EngB GTPase family. Mg(2+) serves as cofactor.

Functionally, necessary for normal cell division and for the maintenance of normal septation. This is Probable GTP-binding protein EngB from Xylella fastidiosa (strain Temecula1 / ATCC 700964).